Here is a 267-residue protein sequence, read N- to C-terminus: 2-keto-3-deoxy-L-rhamnonate aldolase (267 aa).

His49 serves as the catalytic Proton acceptor. Gln151 lines the substrate pocket. Glu153 lines the Mg(2+) pocket. Substrate is bound by residues Ala178 and Asp179. Residue Asp179 coordinates Mg(2+).

The protein belongs to the HpcH/HpaI aldolase family. KDR aldolase subfamily. Homohexamer. The cofactor is Mg(2+).

It catalyses the reaction 2-dehydro-3-deoxy-L-rhamnonate = (S)-lactaldehyde + pyruvate. Catalyzes the reversible retro-aldol cleavage of 2-keto-3-deoxy-L-rhamnonate (KDR) to pyruvate and lactaldehyde. The chain is 2-keto-3-deoxy-L-rhamnonate aldolase from Escherichia coli (strain UTI89 / UPEC).